A 476-amino-acid chain; its full sequence is Aspartyl/glutamyl-tRNA(Asn/Gln) amidotransferase subunit B (476 aa).

Belongs to the GatB/GatE family. GatB subfamily. Heterotrimer of A, B and C subunits.

The enzyme catalyses L-glutamyl-tRNA(Gln) + L-glutamine + ATP + H2O = L-glutaminyl-tRNA(Gln) + L-glutamate + ADP + phosphate + H(+). It carries out the reaction L-aspartyl-tRNA(Asn) + L-glutamine + ATP + H2O = L-asparaginyl-tRNA(Asn) + L-glutamate + ADP + phosphate + 2 H(+). Its function is as follows. Allows the formation of correctly charged Asn-tRNA(Asn) or Gln-tRNA(Gln) through the transamidation of misacylated Asp-tRNA(Asn) or Glu-tRNA(Gln) in organisms which lack either or both of asparaginyl-tRNA or glutaminyl-tRNA synthetases. The reaction takes place in the presence of glutamine and ATP through an activated phospho-Asp-tRNA(Asn) or phospho-Glu-tRNA(Gln). The protein is Aspartyl/glutamyl-tRNA(Asn/Gln) amidotransferase subunit B of Shouchella clausii (strain KSM-K16) (Alkalihalobacillus clausii).